The primary structure comprises 392 residues: Succinate--CoA ligase [ADP-forming] subunit beta (392 aa).

The 239-residue stretch at 9–247 (KEILRVCGVP…LYEEDPKEIE (239 aa)) folds into the ATP-grasp domain. ATP-binding positions include lysine 49, 56-58 (GRG), glutamate 102, glutamine 105, and glutamate 110. Positions 202 and 216 each coordinate Mg(2+). Substrate-binding positions include asparagine 267 and 324-326 (GIM).

It belongs to the succinate/malate CoA ligase beta subunit family. In terms of assembly, heterotetramer of two alpha and two beta subunits. The cofactor is Mg(2+).

The catalysed reaction is succinate + ATP + CoA = succinyl-CoA + ADP + phosphate. It carries out the reaction GTP + succinate + CoA = succinyl-CoA + GDP + phosphate. It functions in the pathway carbohydrate metabolism; tricarboxylic acid cycle; succinate from succinyl-CoA (ligase route): step 1/1. Functionally, succinyl-CoA synthetase functions in the citric acid cycle (TCA), coupling the hydrolysis of succinyl-CoA to the synthesis of either ATP or GTP and thus represents the only step of substrate-level phosphorylation in the TCA. The beta subunit provides nucleotide specificity of the enzyme and binds the substrate succinate, while the binding sites for coenzyme A and phosphate are found in the alpha subunit. The sequence is that of Succinate--CoA ligase [ADP-forming] subunit beta from Neorickettsia sennetsu (strain ATCC VR-367 / Miyayama) (Ehrlichia sennetsu).